Reading from the N-terminus, the 1408-residue chain is ARF guanine-nucleotide exchange factor 1 (1408 aa).

A Phosphoserine modification is found at serine 49. The segment at 262 to 287 (TTTSDNDLSSTDDDSAVADDNKNEKP) is disordered. One can recognise an SEC7 domain in the interval 552 to 706 (FNEKAKKGIQ…IIMLNTDSHN (155 aa)).

Interacts (via N-terminal region) with SEC21 (via C-terminus). Interacts with GMH1. Interacts with DRS2.

Its subcellular location is the cytoplasm. The protein resides in the cytosol. It is found in the membrane. The protein localises to the endoplasmic reticulum. It localises to the mitochondrion. Functionally, activates the ARF proteins by exchanging bound GDP for free GTP. Plays a role in maintaining mitochondrial morphology, and in the turnover of mitochondria through mitophagy. In Saccharomyces cerevisiae (strain ATCC 204508 / S288c) (Baker's yeast), this protein is ARF guanine-nucleotide exchange factor 1 (GEA1).